Here is a 426-residue protein sequence, read N- to C-terminus: Metacaspase-1B (426 aa).

The span at 1 to 14 (MSGYPGAGYNGGGY) shows a compositional bias: gly residues. Residues 1-111 (MSGYPGAGYN…QAPPPPPQAP (111 aa)) form a disordered region. Positions 21 to 68 (QYGGYYPPQPAYNAYQQPPPQQQQYMVYHQPSPGPQQHQHWNPQQQTP) are enriched in low complexity. Active-site residues include H217 and C273.

The protein belongs to the peptidase C14B family.

Its function is as follows. Involved in cell death (apoptosis). In Neurospora crassa (strain ATCC 24698 / 74-OR23-1A / CBS 708.71 / DSM 1257 / FGSC 987), this protein is Metacaspase-1B (casB).